Here is a 309-residue protein sequence, read N- to C-terminus: D-alanine--D-alanine ligase (309 aa).

The ATP-grasp domain occupies 106–305 (KMLWKAFGLP…FEQLVVKILE (200 aa)). Position 136 to 191 (136 to 191 (VEKLGLPVMVKPSLEGSSVGLTKVKRVEDLKSAVDFALKYDDTVLIEEWLSGAEFT)) interacts with ATP. Asp259, Glu272, and Asn274 together coordinate Mg(2+).

Belongs to the D-alanine--D-alanine ligase family. The cofactor is Mg(2+). It depends on Mn(2+) as a cofactor.

The protein localises to the cytoplasm. The enzyme catalyses 2 D-alanine + ATP = D-alanyl-D-alanine + ADP + phosphate + H(+). Its pathway is cell wall biogenesis; peptidoglycan biosynthesis. In terms of biological role, cell wall formation. This Pasteurella multocida (strain Pm70) protein is D-alanine--D-alanine ligase.